A 311-amino-acid polypeptide reads, in one-letter code: MKLFAGNSNRVLAEAVARYLNIPLGKATVRRFADQEIFVEIQENVRGEDVFILQSTSFPTNDHLMELLIMIDAFMRSSAKRITAVIPYFGYARQDRRASGRTPISAKLVANMITRAGVDRVLTLDLHAGQIQGFFDIPTDNLFSVPVMARDVKAKYKQLGNVVVVSPDIGGVVRARALAKRFDAQLAIVDKRRERPGESEVMNIIGAVAGKDCLLIDDIVDSGGTLCNAADALLANGATSVTAYITHGVLSGGAVARISGSKLQELVITDSIQPTQGVLDAPNIRVISIADLMGEAISRTATEESVSSLFD.

ATP contacts are provided by residues 34–36 (DQE) and 93–94 (RQ). H127 and D168 together coordinate Mg(2+). Residue K191 is part of the active site. Residues R193, D217, and 221–225 (DSGGT) contribute to the D-ribose 5-phosphate site.

This sequence belongs to the ribose-phosphate pyrophosphokinase family. Class I subfamily. Homohexamer. It depends on Mg(2+) as a cofactor.

The protein resides in the cytoplasm. It carries out the reaction D-ribose 5-phosphate + ATP = 5-phospho-alpha-D-ribose 1-diphosphate + AMP + H(+). It participates in metabolic intermediate biosynthesis; 5-phospho-alpha-D-ribose 1-diphosphate biosynthesis; 5-phospho-alpha-D-ribose 1-diphosphate from D-ribose 5-phosphate (route I): step 1/1. Functionally, involved in the biosynthesis of the central metabolite phospho-alpha-D-ribosyl-1-pyrophosphate (PRPP) via the transfer of pyrophosphoryl group from ATP to 1-hydroxyl of ribose-5-phosphate (Rib-5-P). The protein is Ribose-phosphate pyrophosphokinase of Mesorhizobium japonicum (strain LMG 29417 / CECT 9101 / MAFF 303099) (Mesorhizobium loti (strain MAFF 303099)).